A 469-amino-acid polypeptide reads, in one-letter code: Ufm1-specific protease 2 (469 aa).

Met-1 carries the post-translational modification N-acetylmethionine. Catalysis depends on residues Cys-302, Asp-426, and His-428.

It belongs to the peptidase C78 family.

Its subcellular location is the endoplasmic reticulum. It is found in the cytoplasm. The protein localises to the nucleus. Its function is as follows. Thiol-dependent isopeptidase that specifically cleaves UFM1, a ubiquitin-like modifier protein, from conjugated proteins, such as CD274/PD-L1, CYB5R3, DDRGK1, MRE11, RPL26/uL24, TRIP4 and RPL26/uL24. While it is also able to mediate the processing of UFM1 precursors, a prerequisite for conjugation reactions, UFSP2 mainly acts as a protein deUFMylase that mediates deconjugation of UFM1 from target proteins. Mediates deUFMylation of RPL26/uL24, a critical step to release the UFM1 ribosome E3 ligase (UREL) complex during the recycling of 60S ribosome subunits from the endoplasmic reticulum. Catalyzes deUFMylation of TRIP4, regulating intracellular nuclear receptors transactivation and thereby regulate cell proliferation and differentiation. The chain is Ufm1-specific protease 2 from Pongo abelii (Sumatran orangutan).